The primary structure comprises 272 residues: Phosphoglycolate phosphatase (272 aa).

The Nucleophile role is filled by aspartate 19. 3 residues coordinate Mg(2+): aspartate 19, aspartate 21, and aspartate 182.

Belongs to the HAD-like hydrolase superfamily. CbbY/CbbZ/Gph/YieH family. Requires Mg(2+) as cofactor.

It carries out the reaction 2-phosphoglycolate + H2O = glycolate + phosphate. It functions in the pathway organic acid metabolism; glycolate biosynthesis; glycolate from 2-phosphoglycolate: step 1/1. Its function is as follows. Specifically catalyzes the dephosphorylation of 2-phosphoglycolate. Is involved in the dissimilation of the intracellular 2-phosphoglycolate formed during the DNA repair of 3'-phosphoglycolate ends, a major class of DNA lesions induced by oxidative stress. This Pseudomonas syringae pv. syringae (strain B728a) protein is Phosphoglycolate phosphatase.